A 216-amino-acid polypeptide reads, in one-letter code: Pyridoxine/pyridoxamine 5'-phosphate oxidase (216 aa).

Substrate is bound by residues 12-15 (RREY) and K70. Residues 65-70 (RLVLLK), 80-81 (YT), R86, K87, and Q109 contribute to the FMN site. Residues Y127, R131, and S135 each contribute to the substrate site. FMN contacts are provided by residues 144–145 (QS) and W189. 195–197 (RLH) is a binding site for substrate. FMN is bound at residue R199.

The protein belongs to the pyridoxamine 5'-phosphate oxidase family. As to quaternary structure, homodimer. FMN is required as a cofactor.

It carries out the reaction pyridoxamine 5'-phosphate + O2 + H2O = pyridoxal 5'-phosphate + H2O2 + NH4(+). It catalyses the reaction pyridoxine 5'-phosphate + O2 = pyridoxal 5'-phosphate + H2O2. The protein operates within cofactor metabolism; pyridoxal 5'-phosphate salvage; pyridoxal 5'-phosphate from pyridoxamine 5'-phosphate: step 1/1. It functions in the pathway cofactor metabolism; pyridoxal 5'-phosphate salvage; pyridoxal 5'-phosphate from pyridoxine 5'-phosphate: step 1/1. Functionally, catalyzes the oxidation of either pyridoxine 5'-phosphate (PNP) or pyridoxamine 5'-phosphate (PMP) into pyridoxal 5'-phosphate (PLP). This is Pyridoxine/pyridoxamine 5'-phosphate oxidase from Baumannia cicadellinicola subsp. Homalodisca coagulata.